A 136-amino-acid chain; its full sequence is NADPH-dependent 7-cyano-7-deazaguanine reductase (136 aa).

The Thioimide intermediate role is filled by Cys-50. Catalysis depends on Asp-57, which acts as the Proton donor. Substrate contacts are provided by residues 72 to 74 (YEL) and 91 to 92 (HE).

The protein belongs to the GTP cyclohydrolase I family. QueF type 1 subfamily.

It localises to the cytoplasm. The enzyme catalyses 7-aminomethyl-7-carbaguanine + 2 NADP(+) = 7-cyano-7-deazaguanine + 2 NADPH + 3 H(+). The protein operates within tRNA modification; tRNA-queuosine biosynthesis. In terms of biological role, catalyzes the NADPH-dependent reduction of 7-cyano-7-deazaguanine (preQ0) to 7-aminomethyl-7-deazaguanine (preQ1). The sequence is that of NADPH-dependent 7-cyano-7-deazaguanine reductase from Prochlorococcus marinus (strain MIT 9215).